An 85-amino-acid polypeptide reads, in one-letter code: Kunitz-type serine protease inhibitor homolog beta-bungarotoxin B1 chain (85 aa).

Positions 1-24 (MSSGGLLLLLGLLTLCAELTPVSS) are cleaved as a signal peptide. The region spanning 31-81 (CDKPPDKGNCGSVRRAFYYDTRLKTCKAFPYRGCNGNGNHFKTETLCRCEC) is the BPTI/Kunitz inhibitor domain. Intrachain disulfides connect cysteine 31/cysteine 81, cysteine 40/cysteine 64, and cysteine 56/cysteine 77.

This sequence belongs to the venom Kunitz-type family. As to quaternary structure, heterodimer; disulfide-linked. The A chain has phospholipase A2 activity and the B chain shows homology with the basic protease inhibitors. As to expression, expressed by the venom gland.

It is found in the secreted. Beta-bungarotoxin is a presynaptic neurotoxin of the venom. The B chain is homologous to venom basic protease inhibitors but has no protease inhibitor activity and is non-toxic. This is Kunitz-type serine protease inhibitor homolog beta-bungarotoxin B1 chain from Bungarus candidus (Malayan krait).